A 395-amino-acid chain; its full sequence is L-lactate dehydrogenase (395 aa).

One can recognise an FMN hydroxy acid dehydrogenase domain in the interval 1–380; that stretch reads MIISAASDYR…SKDSLVQELS (380 aa). Residue tyrosine 24 participates in substrate binding. FMN contacts are provided by serine 106 and glutamine 127. Tyrosine 129 lines the substrate pocket. Threonine 155 contributes to the FMN binding site. Arginine 164 is a substrate binding site. Lysine 251 lines the FMN pocket. Catalysis depends on histidine 275, which acts as the Proton acceptor. Arginine 278 contributes to the substrate binding site. Residue 306-330 participates in FMN binding; sequence DSGIRNGLDVVRMIALGADSVLLGR.

It belongs to the FMN-dependent alpha-hydroxy acid dehydrogenase family. It depends on FMN as a cofactor.

It is found in the cell inner membrane. The catalysed reaction is (S)-lactate + A = pyruvate + AH2. Functionally, catalyzes the conversion of L-lactate to pyruvate. Is coupled to the respiratory chain. In Enterobacter sp. (strain 638), this protein is L-lactate dehydrogenase.